The sequence spans 512 residues: Maturase K (512 aa).

It belongs to the intron maturase 2 family. MatK subfamily.

Its subcellular location is the plastid. The protein localises to the chloroplast. In terms of biological role, usually encoded in the trnK tRNA gene intron. Probably assists in splicing its own and other chloroplast group II introns. This is Maturase K from Acer platanoides (Norway maple).